The chain runs to 205 residues: Holliday junction branch migration complex subunit RuvA (205 aa).

The segment at 1–64 is domain I; that stretch reads MIGRLKGILV…EDAQLLYGFI (64 aa). The interval 65–143 is domain II; sequence HKEERSLFRL…SLMEASMGAE (79 aa). Residues 144-156 are flexible linker; the sequence is REFVLKSNFTPAP. Positions 157–205 are domain III; sequence VAATVEEDAIAALLSLGYKPQQASKAVSSAFQEGMDPEQLIKAALKSML.

It belongs to the RuvA family. Homotetramer. Forms an RuvA(8)-RuvB(12)-Holliday junction (HJ) complex. HJ DNA is sandwiched between 2 RuvA tetramers; dsDNA enters through RuvA and exits via RuvB. An RuvB hexamer assembles on each DNA strand where it exits the tetramer. Each RuvB hexamer is contacted by two RuvA subunits (via domain III) on 2 adjacent RuvB subunits; this complex drives branch migration. In the full resolvosome a probable DNA-RuvA(4)-RuvB(12)-RuvC(2) complex forms which resolves the HJ.

The protein resides in the cytoplasm. The RuvA-RuvB-RuvC complex processes Holliday junction (HJ) DNA during genetic recombination and DNA repair, while the RuvA-RuvB complex plays an important role in the rescue of blocked DNA replication forks via replication fork reversal (RFR). RuvA specifically binds to HJ cruciform DNA, conferring on it an open structure. The RuvB hexamer acts as an ATP-dependent pump, pulling dsDNA into and through the RuvAB complex. HJ branch migration allows RuvC to scan DNA until it finds its consensus sequence, where it cleaves and resolves the cruciform DNA. This Shewanella amazonensis (strain ATCC BAA-1098 / SB2B) protein is Holliday junction branch migration complex subunit RuvA.